The following is a 495-amino-acid chain: Surface E' protein (495 aa).

The helical transmembrane segment at 224–235 (GTLIGLVALIGV) threads the bilayer.

The protein resides in the cell membrane. This is Surface E' protein (cbbE') from Coxiella burnetii.